Reading from the N-terminus, the 198-residue chain is Anthranilate synthase component 2 (198 aa).

The Glutamine amidotransferase type-1 domain maps to 1-194; sequence MILIIDNYDS…VNQVNENKES (194 aa). 50–52 provides a ligand contact to L-glutamine; that stretch reads GPG. C77 (nucleophile; for GATase activity) is an active-site residue. L-glutamine-binding positions include Q81 and 128 to 129; that span reads SI. Catalysis depends on for GATase activity residues H168 and E170.

As to quaternary structure, heterotetramer consisting of two non-identical subunits: a beta subunit (TrpG) and a large alpha subunit (TrpE).

The enzyme catalyses chorismate + L-glutamine = anthranilate + pyruvate + L-glutamate + H(+). It participates in amino-acid biosynthesis; L-tryptophan biosynthesis; L-tryptophan from chorismate: step 1/5. Its function is as follows. Part of a heterotetrameric complex that catalyzes the two-step biosynthesis of anthranilate, an intermediate in the biosynthesis of L-tryptophan. In the first step, the glutamine-binding beta subunit (TrpG) of anthranilate synthase (AS) provides the glutamine amidotransferase activity which generates ammonia as a substrate that, along with chorismate, is used in the second step, catalyzed by the large alpha subunit of AS (TrpE) to produce anthranilate. In the absence of TrpG, TrpE can synthesize anthranilate directly from chorismate and high concentrations of ammonia. The chain is Anthranilate synthase component 2 (trpG) from Lactococcus lactis subsp. lactis (strain IL1403) (Streptococcus lactis).